Here is a 125-residue protein sequence, read N- to C-terminus: Small ribosomal subunit protein uS12 (125 aa).

Asp89 is subject to 3-methylthioaspartic acid. Positions 104–125 are disordered; the sequence is TAGVKDRSQSRSKYGAKASKQD.

This sequence belongs to the universal ribosomal protein uS12 family. As to quaternary structure, part of the 30S ribosomal subunit. Contacts proteins S8 and S17. May interact with IF1 in the 30S initiation complex.

With S4 and S5 plays an important role in translational accuracy. Its function is as follows. Interacts with and stabilizes bases of the 16S rRNA that are involved in tRNA selection in the A site and with the mRNA backbone. Located at the interface of the 30S and 50S subunits, it traverses the body of the 30S subunit contacting proteins on the other side and probably holding the rRNA structure together. The combined cluster of proteins S8, S12 and S17 appears to hold together the shoulder and platform of the 30S subunit. The polypeptide is Small ribosomal subunit protein uS12 (Prochlorococcus marinus (strain MIT 9303)).